Reading from the N-terminus, the 1086-residue chain is Sterol regulatory element-binding protein cleavage-activating protein (1086 aa).

Over 1-35 (MRIFTLGKGRISRGYARQVNPSLFAKYSYCIANNP) the chain is Cytoplasmic. The helical transmembrane segment at 36–56 (WYFILVFTLLSITGIYSSLVA) threads the bilayer. At 57–229 (YQQSLYDQSL…TVVARIPDLT (173 aa)) the chain is on the lumenal side. Residues Asn-94 and Asn-168 are each glycosylated (N-linked (GlcNAc...) asparagine). The helical transmembrane segment at 230-250 (VIYRWYLWVGFGVGLFAYLYL) threads the bilayer. Residues 233-391 (RWYLWVGFGV…GSFFLAVLSV (159 aa)) form the SSD domain. Residues 251–265 (SLVRLHDIRAKFGLT) lie on the Cytoplasmic side of the membrane. Residues 266 to 286 (ATIFIQSGTAYFSTCSLLYFF) traverse the membrane as a helical segment. The Lumenal segment spans residues 287-290 (ERTG). The chain crosses the membrane as a helical span at residues 291–311 (PICPWPMAYYIIIFMDIENSF). Over 312 to 337 (RLLRAVIASPQTKRVPSRIMEGFSST) the chain is Cytoplasmic. A helical transmembrane segment spans residues 338–358 (IIASFSSLLKKLLTLFVLSFF). Residues 359–367 (VYPLVQEFC) lie on the Lumenal side of the membrane. Residues 368 to 388 (LFLACSFVVSFLLHGSFFLAV) form a helical membrane-spanning segment. Residues 389–422 (LSVDIRRLELQDFLDSNSSNRNSKWWVPYLEYVR) are Cytoplasmic-facing. The short motif at 396–401 (LELQDF) is the ER export signal element. The helical transmembrane segment at 423 to 443 (FMWSPWIIDNLGTVSFHMYVI) threads the bilayer. At 444–544 (YLQLQSSTDI…FHDRRVWRWS (101 aa)) the chain is on the lumenal side. N-linked (GlcNAc...) asparagine glycosylation occurs at Asn-454. The helical transmembrane segment at 545-565 (TFFSILFAIDFAVGLLVKALL) threads the bilayer. Residues 566-1086 (RGWSDHDELS…QRKRSGTIGC (521 aa)) lie on the Cytoplasmic side of the membrane. WD repeat units lie at residues 593 to 632 (HHQLDILKIAVSENYKTFASVGLDRCLVVWDLRQWCTKLV), 637 to 675 (QMPRTLKAIALDPQGNYVSLFSKDTLFILNVESPCLMLQ), 680 to 727 (CKPN…EGAD), 736 to 776 (LSSP…WSPK), and 963 to 1009 (GHYN…KKHR). The tract at residues 640-1086 (RTLKAIALDP…QRKRSGTIGC (447 aa)) is interaction with sre1.

The protein belongs to the WD repeat SCAP family. As to quaternary structure, forms a tight complex with scp1, composed of 4 copies of scp1 and 4 copies of sre1.

It is found in the endoplasmic reticulum membrane. The protein localises to the golgi apparatus membrane. Functionally, escort protein required for sre1 processing at low sterol as well as oxygen levels. May regulate export of the scp1/sre1 complex from the ER at low sterol or oxygen levels. 4-methyl sterols bound to scp1 may mask an ER export signal in scp1 leading to retention of the complex in the ER. Release of 4-methyl sterols may trigger a conformational change in the SSD domain of scp1 unmasking the ER export signal leading to recruitment into COPII-coated vesicles, transport to the Golgi complex, proteolytic cleavage of sre1 in the Golgi, release of the transcription factor fragment of sre1 from the membrane, its import into the nucleus and up-regulation of genes required for ergosterol biosynthesis as well as anaerobic growth. Binds 4-methyl sterols. In Schizosaccharomyces pombe (strain 972 / ATCC 24843) (Fission yeast), this protein is Sterol regulatory element-binding protein cleavage-activating protein.